The sequence spans 122 residues: Large ribosomal subunit protein uL14 (122 aa).

This sequence belongs to the universal ribosomal protein uL14 family. Part of the 50S ribosomal subunit. Forms a cluster with proteins L3 and L19. In the 70S ribosome, L14 and L19 interact and together make contacts with the 16S rRNA in bridges B5 and B8.

Functionally, binds to 23S rRNA. Forms part of two intersubunit bridges in the 70S ribosome. The sequence is that of Large ribosomal subunit protein uL14 from Lactobacillus delbrueckii subsp. bulgaricus (strain ATCC 11842 / DSM 20081 / BCRC 10696 / JCM 1002 / NBRC 13953 / NCIMB 11778 / NCTC 12712 / WDCM 00102 / Lb 14).